We begin with the raw amino-acid sequence, 486 residues long: NGFI-A-binding protein 1 (486 aa).

The segment at 4 to 82 (ALPRTLGELQ…RDWVTNPGLF (79 aa)) is NCD1. Residues Lys-126, Lys-129, and Lys-143 each participate in a glycyl lysine isopeptide (Lys-Gly) (interchain with G-Cter in SUMO2) cross-link. The segment at 160 to 187 (WQGHHATESEHSLSPADLGSPASPKESS) is disordered. 2 positions are modified to phosphoserine: Ser-171 and Ser-182. Lys-211 participates in a covalent cross-link: Glycyl lysine isopeptide (Lys-Gly) (interchain with G-Cter in SUMO2). The tract at residues 220 to 309 (LLKNNKKLAK…ARQVSREVTY (90 aa)) is NCD2. The tract at residues 306 to 337 (EVTYKYTYRTTRLKCGERDELSPKRIKIEDGF) is necessary for nuclear localization. Phosphoserine is present on Ser-327. A Glycyl lysine isopeptide (Lys-Gly) (interchain with G-Cter in SUMO1); alternate cross-link involves residue Lys-332. Residue Lys-332 forms a Glycyl lysine isopeptide (Lys-Gly) (interchain with G-Cter in SUMO2); alternate linkage. Glycyl lysine isopeptide (Lys-Gly) (interchain with G-Cter in SUMO2) cross-links involve residues Lys-354, Lys-368, and Lys-372. Residues 398 to 438 (RQSSGEQSPDGGLPSDSSDGQGERPLNLRIPSVQNRQPHHF) are disordered. Positions 404-417 (QSPDGGLPSDSSDG) are enriched in low complexity. Ser-405 carries the phosphoserine modification. Glycyl lysine isopeptide (Lys-Gly) (interchain with G-Cter in SUMO2) cross-links involve residues Lys-453, Lys-464, and Lys-476. Lys-479 participates in a covalent cross-link: Glycyl lysine isopeptide (Lys-Gly) (interchain with G-Cter in SUMO1); alternate. Residue Lys-479 forms a Glycyl lysine isopeptide (Lys-Gly) (interchain with G-Cter in SUMO2); alternate linkage.

Belongs to the NAB family. In terms of assembly, homomultimers may associate with EGR1 bound to DNA. Widely expressed in adult. In day 16 embryo highest levels in forebrain, thymus, salivary gland and cartilage.

The protein localises to the nucleus. In terms of biological role, acts as a transcriptional repressor for zinc finger transcription factors EGR1 and EGR2. The chain is NGFI-A-binding protein 1 (Nab1) from Mus musculus (Mouse).